The following is a 207-amino-acid chain: Anthranilate synthase component II (207 aa).

Residues 17–207 form the Glutamine amidotransferase type-1 domain; that stretch reads RVLFVDNFDS…DVIRNFLAGL (191 aa). 66 to 68 is an L-glutamine binding site; the sequence is GPG. The active-site Nucleophile; for GATase activity is the C96. Position 146-147 (146-147) interacts with L-glutamine; the sequence is SL. Active-site residues include H187 and E189.

In terms of assembly, tetramer of two components I and two components II.

It catalyses the reaction chorismate + L-glutamine = anthranilate + pyruvate + L-glutamate + H(+). It participates in amino-acid biosynthesis; L-tryptophan biosynthesis; L-tryptophan from chorismate: step 1/5. This chain is Anthranilate synthase component II (trpG1), found in Haloarcula marismortui (strain ATCC 43049 / DSM 3752 / JCM 8966 / VKM B-1809) (Halobacterium marismortui).